Here is a 254-residue protein sequence, read N- to C-terminus: Protein odd-skipped-related 2 (254 aa).

3 consecutive C2H2-type zinc fingers follow at residues Phe124–His146, Tyr152–His174, and Phe180–His202.

The protein belongs to the Odd C2H2-type zinc-finger protein family.

The protein resides in the nucleus. May function as transcription regulator. Required for morphogenesis and function of the digestive tract. This Caenorhabditis elegans protein is Protein odd-skipped-related 2.